We begin with the raw amino-acid sequence, 475 residues long: Sensor histidine kinase GlrK (475 aa).

Over 1 to 13 the chain is Cytoplasmic; the sequence is MKRWPVFPRSLRQ. A helical transmembrane segment spans residues 14-34; sequence LVMLAFLLILLPLLVLAWQAW. Residues 35–173 are Periplasmic-facing; the sequence is QSLNALSDQA…LQREIAERGQ (139 aa). The chain crosses the membrane as a helical span at residues 174–194; sequence YFGWQSLVLFLVSLVMVLLFT. Over 195–475 the chain is Cytoplasmic; the sequence is RMIIGPVKNI…IELPSSKNTK (281 aa). In terms of domain architecture, Histidine kinase spans 256–472; sequence HLSHELKTPL…CFRIELPSSK (217 aa). Position 259 is a phosphohistidine; by autocatalysis (His259).

Autophosphorylated.

It is found in the cell inner membrane. The catalysed reaction is ATP + protein L-histidine = ADP + protein N-phospho-L-histidine.. Its function is as follows. Member of the two-component regulatory system GlrR/GlrK that up-regulates transcription of the glmY sRNA when cells enter the stationary growth phase. Activates GlrR by phosphorylation. This Escherichia coli (strain K12) protein is Sensor histidine kinase GlrK (glrK).